The sequence spans 328 residues: Thiamine-monophosphate kinase (328 aa).

Residues Asp30, Thr45, Thr46, and Asp47 each coordinate Mg(2+). Residue His54 participates in substrate binding. The Mg(2+) site is built by Asp75 and Asp122. Residues 121–122 (GD) and Arg146 each bind ATP. Asp211 is a Mg(2+) binding site. Residue Ser213 participates in ATP binding. Asp214 is a binding site for Mg(2+). 2 residues coordinate substrate: Glu262 and Phe321.

The protein belongs to the thiamine-monophosphate kinase family.

It carries out the reaction thiamine phosphate + ATP = thiamine diphosphate + ADP. It participates in cofactor biosynthesis; thiamine diphosphate biosynthesis; thiamine diphosphate from thiamine phosphate: step 1/1. Its function is as follows. Catalyzes the ATP-dependent phosphorylation of thiamine-monophosphate (TMP) to form thiamine-pyrophosphate (TPP), the active form of vitamin B1. The polypeptide is Thiamine-monophosphate kinase (Haemophilus influenzae (strain ATCC 51907 / DSM 11121 / KW20 / Rd)).